The sequence spans 323 residues: MMENSPKTRRLNILPDNPENTGDGVVGLGRFPSWLHRPLPKGNQLQITGQVINQNRLHTVCEEAKCPNLLECWTKKTATFLVMGKECSRNCGFCDIDFSKNPKPLDRSEPSRVALSVQQLGLKHVVITMVARDDLSDGGSSHLVEVIEAIRQTNEDVTIEVLTSDFEGNRKALSFVLQAKPEIFNHNIETVRRLTPRVRHKATYERTLSVLEQAAQKKYHSQLKVKSGIMVGLGETEEEIFETLLDLKRVGCEIVTIGQYLQPNRQKLLVKSFVHPDIFKKYEQYGLSIGIPHLYCGPFVRSSYNANLVLMRANQKEAIVNSE.

Positions 61, 66, 72, 87, 91, 94, and 303 each coordinate [4Fe-4S] cluster. Residues 73–292 form the Radical SAM core domain; that stretch reads WTKKTATFLV…EQYGLSIGIP (220 aa).

Belongs to the radical SAM superfamily. Lipoyl synthase family. Requires [4Fe-4S] cluster as cofactor.

The protein resides in the cytoplasm. It carries out the reaction [[Fe-S] cluster scaffold protein carrying a second [4Fe-4S](2+) cluster] + N(6)-octanoyl-L-lysyl-[protein] + 2 oxidized [2Fe-2S]-[ferredoxin] + 2 S-adenosyl-L-methionine + 4 H(+) = [[Fe-S] cluster scaffold protein] + N(6)-[(R)-dihydrolipoyl]-L-lysyl-[protein] + 4 Fe(3+) + 2 hydrogen sulfide + 2 5'-deoxyadenosine + 2 L-methionine + 2 reduced [2Fe-2S]-[ferredoxin]. The protein operates within protein modification; protein lipoylation via endogenous pathway; protein N(6)-(lipoyl)lysine from octanoyl-[acyl-carrier-protein]: step 2/2. Functionally, catalyzes the radical-mediated insertion of two sulfur atoms into the C-6 and C-8 positions of the octanoyl moiety bound to the lipoyl domains of lipoate-dependent enzymes, thereby converting the octanoylated domains into lipoylated derivatives. The polypeptide is Lipoyl synthase (Protochlamydia amoebophila (strain UWE25)).